Consider the following 435-residue polypeptide: Sex peptide receptor (435 aa).

Residues Met1–Gly93 lie on the Extracellular side of the membrane. A helical membrane pass occupies residues Tyr94–Leu114. Residues Ser115–Asn124 lie on the Cytoplasmic side of the membrane. A helical transmembrane segment spans residues Phe125 to Leu145. Residues Trp146–Ser168 lie on the Extracellular side of the membrane. Residues Ile169–Leu189 traverse the membrane as a helical segment. At Ala190–Arg211 the chain is on the cytoplasmic side. A helical transmembrane segment spans residues Val212 to Pro229. Residues Arg230–Arg276 lie on the Extracellular side of the membrane. Residues Val277–Ala297 traverse the membrane as a helical segment. Over Ala298–Thr327 the chain is Cytoplasmic. A helical membrane pass occupies residues Thr328–Val348. At Thr349–Asn368 the chain is on the extracellular side. A helical transmembrane segment spans residues Ile369–Tyr389. Over Cys390–Leu435 the chain is Cytoplasmic.

Belongs to the G-protein coupled receptor 1 family. In terms of tissue distribution, in the female, expressed in the reproductive organs; strongly expressed in the spermathecae and the lower oviduct. No expression in the male reproductive organs. In the central nervous system of both sexes, it is expressed in the brain and ventral nerve cord (VNC); strongly expressed in the ventral regions of the suboesophageal ganglion, the cervical connective and in many nerve roots of the brain and VNC. Expressed in the s-LNvs and l-LNvs pdf neurons (at protein level).

It is found in the cell membrane. Receptor for two functionally unrelated ligands; SP (A70A) for controlling reproductive behaviors and MIP for controlling sleep behavior. MIP-SPR pathway functions as a sleep homeostat which perceives the need for sleep and stabilizes it by providing a slow-acting inhibitory input to the fly arousal system that involve the pigment dispersing factor (pdf) neurons. SP-SPR is one of the multiple SP pathways that induce female post-mating behavioral responses (PMR) such as the suppression of mating receptivity and initiation of egg laying. The PMR switch is achieved by mediating the synaptic output of neurons such as those expressing fruitless (fru), double sex (dsx) and pickpocket (ppk). The polypeptide is Sex peptide receptor (Drosophila melanogaster (Fruit fly)).